The chain runs to 198 residues: Ribonuclease HII (198 aa).

The region spanning 9–198 (ITVAGADEAG…LLPDQLKIDF (190 aa)) is the RNase H type-2 domain. A divalent metal cation contacts are provided by Asp-15, Glu-16, and Asp-107.

Belongs to the RNase HII family. Mn(2+) serves as cofactor. The cofactor is Mg(2+).

It localises to the cytoplasm. It carries out the reaction Endonucleolytic cleavage to 5'-phosphomonoester.. In terms of biological role, endonuclease that specifically degrades the RNA of RNA-DNA hybrids. The polypeptide is Ribonuclease HII (Christiangramia forsetii (strain DSM 17595 / CGMCC 1.15422 / KT0803) (Gramella forsetii)).